We begin with the raw amino-acid sequence, 390 residues long: Caveolae-associated protein 1 (390 aa).

Met-1 is subject to N-acetylmethionine. Positions 1–40 (MEDPTLYIVERPLPGYPDAEAPEPSSAGAQAAEEPSGAGS) are disordered. Residues 1 to 98 (MEDPTLYIVE…IQGELSKLGK (98 aa)) are required for homotrimerization and for interaction with CAVIN2 and CAVIN3. A compositionally biased stretch (low complexity) spans 22–40 (PEPSSAGAQAAEEPSGAGS). 3 positions are modified to phosphoserine: Ser-36, Ser-40, and Ser-46. The segment at 52–62 (VLVLSLLDKII) is nuclear export signal. The tract at residues 53 to 75 (LVLSLLDKIIGAVDQIQLTQAQL) is leucine-zipper 1. Lys-116 participates in a covalent cross-link: Glycyl lysine isopeptide (Lys-Gly) (interchain with G-Cter in SUMO2). Position 118 is a phosphoserine (Ser-118). Lys-122 is covalently cross-linked (Glycyl lysine isopeptide (Lys-Gly) (interchain with G-Cter in SUMO2)). Residues 136-152 (KKLEVNEAELLRRRNFK) are nuclear localization signal. Tyr-156 is modified (phosphotyrosine). Lys-161 participates in a covalent cross-link: Glycyl lysine isopeptide (Lys-Gly) (interchain with G-Cter in SUMO1); alternate. Lys-161 is covalently cross-linked (Glycyl lysine isopeptide (Lys-Gly) (interchain with G-Cter in SUMO2); alternate). Lys-165 participates in a covalent cross-link: Glycyl lysine isopeptide (Lys-Gly) (interchain with G-Cter in SUMO2). The tract at residues 166–186 (LSISKSLKESEALPEKEGEEL) is leucine-zipper 2. Residues Ser-167 and Ser-169 each carry the phosphoserine modification. Residue Lys-170 forms a Glycyl lysine isopeptide (Lys-Gly) (interchain with G-Cter in SUMO2) linkage. Phosphoserine is present on residues Ser-171 and Ser-175. A compositionally biased stretch (basic and acidic residues) spans 172–181 (LKESEALPEK). A disordered region spans residues 172 to 201 (LKESEALPEKEGEELGEGERPEEDAAALEL). The segment covering 182–201 (EGEELGEGERPEEDAAALEL) has biased composition (acidic residues). A coiled-coil region spans residues 199–282 (LELSSDEAVE…RMNKLGTRLV (84 aa)). Ser-202 and Ser-203 each carry phosphoserine. The tract at residues 233–249 (KKAFSKEKMEKTKVRTR) is nuclear localization signal. The leucine-zipper 3 stretch occupies residues 257 to 297 (LKTKENLEKTRHTLEKRMNKLGTRLVPAERREKLKTSRDKL). Ser-300 carries the post-translational modification Phosphoserine. Thr-302 is modified (phosphothreonine). Tyr-308 carries the post-translational modification Phosphotyrosine. Lys-326 is covalently cross-linked (Glycyl lysine isopeptide (Lys-Gly) (interchain with G-Cter in SUMO2)). The tract at residues 344–366 (VGADDDEGGAERGEAGDLRRGSS) is disordered. A compositionally biased stretch (basic and acidic residues) spans 352–365 (GAERGEAGDLRRGS). Phosphoserine occurs at positions 365, 366, 379, 387, and 389.

The protein belongs to the CAVIN family. As to quaternary structure, component of the CAVIN complex composed of CAVIN1, CAVIN2, CAVIN3 and CAVIN4. Homotrimer. Interacts with TTF1. Interacts with RNA polymerase I subunit POLR1A/RPA1. Binds the 3' end of pre-rRNA. Interacts with transcription factor ZNF148. Interacts with LIPE in the adipocyte cytoplasm. Interacts with CAV1 and CAVIN3. Interacts with CAVIN2. Interacts with CAVIN4 and CAV3. Post-translationally, phosphorylated. Present in active and inactive forms. Changes in phosphorylation pattern may alter activity. Phosphorylation at Tyr-156 is essential for its functionin the regulation of ribosomal transcriptional activity. Five truncated forms are found in the caveolae. These are thought to be the result of proteolysis and may be phosphorylation-dependent. In terms of processing, monoubiquitinated.

Its subcellular location is the membrane. It is found in the caveola. The protein resides in the cell membrane. The protein localises to the microsome. It localises to the endoplasmic reticulum. Its subcellular location is the cytoplasm. It is found in the cytosol. The protein resides in the mitochondrion. The protein localises to the nucleus. In terms of biological role, plays an important role in caveolae formation and organization. Essential for the formation of caveolae in all tissues. Core component of the CAVIN complex which is essential for recruitment of the complex to the caveolae in presence of calveolin-1 (CAV1). Essential for normal oligomerization of CAV1. Promotes ribosomal transcriptional activity in response to metabolic challenges in the adipocytes and plays an important role in the formation of the ribosomal transcriptional loop. Dissociates transcription complexes paused by DNA-bound TTF1, thereby releasing both RNA polymerase I and pre-RNA from the template. The caveolae biogenesis pathway is required for the secretion of proteins such as GASK1A. This is Caveolae-associated protein 1 from Homo sapiens (Human).